Reading from the N-terminus, the 238-residue chain is Ribonuclease PH (238 aa).

Phosphate is bound by residues Arg86 and Gly124–Arg126.

It belongs to the RNase PH family. Homohexameric ring arranged as a trimer of dimers.

The catalysed reaction is tRNA(n+1) + phosphate = tRNA(n) + a ribonucleoside 5'-diphosphate. Phosphorolytic 3'-5' exoribonuclease that plays an important role in tRNA 3'-end maturation. Removes nucleotide residues following the 3'-CCA terminus of tRNAs; can also add nucleotides to the ends of RNA molecules by using nucleoside diphosphates as substrates, but this may not be physiologically important. Probably plays a role in initiation of 16S rRNA degradation (leading to ribosome degradation) during starvation. In Acinetobacter baumannii (strain AB307-0294), this protein is Ribonuclease PH.